Consider the following 933-residue polypeptide: 2-oxoglutarate dehydrogenase E1 component (933 aa).

The protein belongs to the alpha-ketoglutarate dehydrogenase family. As to quaternary structure, homodimer. Part of the 2-oxoglutarate dehydrogenase (OGDH) complex composed of E1 (2-oxoglutarate dehydrogenase), E2 (dihydrolipoamide succinyltransferase) and E3 (dihydrolipoamide dehydrogenase); the complex contains multiple copies of the three enzymatic components (E1, E2 and E3). Interacts (via N-terminus) with SucB, the E2 component of OGDH complex. Requires thiamine diphosphate as cofactor.

The catalysed reaction is N(6)-[(R)-lipoyl]-L-lysyl-[protein] + 2-oxoglutarate + H(+) = N(6)-[(R)-S(8)-succinyldihydrolipoyl]-L-lysyl-[protein] + CO2. Its function is as follows. E1 component of the 2-oxoglutarate dehydrogenase (OGDH) complex which catalyzes the decarboxylation of 2-oxoglutarate, the first step in the conversion of 2-oxoglutarate to succinyl-CoA and CO(2). The protein is 2-oxoglutarate dehydrogenase E1 component (sucA) of Escherichia coli O157:H7.